A 148-amino-acid polypeptide reads, in one-letter code: Transcriptional regulator MraZ (148 aa).

SpoVT-AbrB domains follow at residues 5 to 53 (ETAI…VEKE) and 82 to 125 (SALL…SEQA).

This sequence belongs to the MraZ family. In terms of assembly, forms oligomers.

It localises to the cytoplasm. The protein localises to the nucleoid. The sequence is that of Transcriptional regulator MraZ from Xylella fastidiosa (strain Temecula1 / ATCC 700964).